The chain runs to 104 residues: Large ribosomal subunit protein uL24 (104 aa).

This sequence belongs to the universal ribosomal protein uL24 family. Part of the 50S ribosomal subunit.

One of two assembly initiator proteins, it binds directly to the 5'-end of the 23S rRNA, where it nucleates assembly of the 50S subunit. In terms of biological role, one of the proteins that surrounds the polypeptide exit tunnel on the outside of the subunit. This chain is Large ribosomal subunit protein uL24, found in Pectobacterium carotovorum subsp. carotovorum (strain PC1).